Here is a 437-residue protein sequence, read N- to C-terminus: tRNA-2-methylthio-N(6)-dimethylallyladenosine synthase (437 aa).

In terms of domain architecture, MTTase N-terminal spans 1–115 (MKVYIETMGC…ISQVIHKEKA (115 aa)). Positions 10, 46, 78, 148, 152, and 155 each coordinate [4Fe-4S] cluster. A Radical SAM core domain is found at 134 to 367 (KKAQIRSLLN…QNRHKEILEE (234 aa)). The TRAM domain occupies 370–436 (KLEVGKTHVV…KGRLIAAIKG (67 aa)).

Belongs to the methylthiotransferase family. MiaB subfamily. As to quaternary structure, monomer. The cofactor is [4Fe-4S] cluster.

The protein localises to the cytoplasm. It catalyses the reaction N(6)-dimethylallyladenosine(37) in tRNA + (sulfur carrier)-SH + AH2 + 2 S-adenosyl-L-methionine = 2-methylsulfanyl-N(6)-dimethylallyladenosine(37) in tRNA + (sulfur carrier)-H + 5'-deoxyadenosine + L-methionine + A + S-adenosyl-L-homocysteine + 2 H(+). Its function is as follows. Catalyzes the methylthiolation of N6-(dimethylallyl)adenosine (i(6)A), leading to the formation of 2-methylthio-N6-(dimethylallyl)adenosine (ms(2)i(6)A) at position 37 in tRNAs that read codons beginning with uridine. This is tRNA-2-methylthio-N(6)-dimethylallyladenosine synthase from Helicobacter pylori (strain P12).